Here is a 949-residue protein sequence, read N- to C-terminus: Sensor histidine kinase RcsC (949 aa).

The Cytoplasmic segment spans residues 1 to 19 (MKYLASFRTTLKASRYMFR). The chain crosses the membrane as a helical span at residues 20–41 (ALALVLWLLIAFSSVFYIVNAL). Topologically, residues 42–313 (HQRESEIRQE…PVDKVLERIR (272 aa)) are periplasmic. Residues 314-335 (MLILNAILLNVLAGAALFTLAR) form a helical membrane-spanning segment. Residues 336-949 (MYERRIFIPA…AERVRKSRDS (614 aa)) are Cytoplasmic-facing. In terms of domain architecture, PAS spans 357 to 425 (QFNRKIVASA…VLTSNNTNLQ (69 aa)). The region spanning 476 to 692 (TVSHELRTPL…QFTVRIPLYG (217 aa)) is the Histidine kinase domain. H479 carries the post-translational modification Phosphohistidine; by autocatalysis. An ABL domain is found at 705–805 (SGKRCWLAVR…ARIYLIEMES (101 aa)). The Response regulatory domain maps to 826–940 (MILVVDDHPI…VIKQTLTLYA (115 aa)). D875 bears the 4-aspartylphosphate mark.

The protein belongs to the RcsC family. Interacts with RcsD. Post-translationally, autophosphorylated. Activation probably requires a transfer of a phosphate group from a His in the transmitter domain to an Asp in the receiver domain.

The protein resides in the cell inner membrane. The catalysed reaction is ATP + protein L-histidine = ADP + protein N-phospho-L-histidine.. The Rcs phosphorelay may be activated by RcsF. DjlA, LolA and OmpG might act as a regulator of the phosphorelay. Activity is probably up-regulated by YmgA/AriR, and possibly down-regulated by YcgZ, all 3 are connector proteins providing additional signal input into signaling system. Its function is as follows. Component of the Rcs signaling system, which controls transcription of numerous genes. RcsC functions as a membrane-associated protein kinase that phosphorylates RcsD in response to environmental signals. The phosphoryl group is then transferred to the response regulator RcsB. RcsC also has phosphatase activity. The system controls expression of genes involved in colanic acid capsule synthesis, biofilm formation and cell division. The chain is Sensor histidine kinase RcsC from Escherichia coli (strain K12).